Reading from the N-terminus, the 130-residue chain is Large ribosomal subunit protein bL17 (130 aa).

This sequence belongs to the bacterial ribosomal protein bL17 family. Part of the 50S ribosomal subunit. Contacts protein L32.

The polypeptide is Large ribosomal subunit protein bL17 (Nitrosomonas europaea (strain ATCC 19718 / CIP 103999 / KCTC 2705 / NBRC 14298)).